A 48-amino-acid chain; its full sequence is MTNSQAPMQAAEVRVYPIFTVRWLAVHALAIPSVFFLGSIAAMQFVAR.

A helical membrane pass occupies residues 23–39 (WLAVHALAIPSVFFLGS). His27 provides a ligand contact to heme.

Belongs to the PsbE/PsbF family. In terms of assembly, heterodimer of an alpha subunit and a beta subunit. PSII is composed of 1 copy each of membrane proteins PsbA, PsbB, PsbC, PsbD, PsbE, PsbF, PsbH, PsbI, PsbJ, PsbK, PsbL, PsbM, PsbT, PsbX, PsbY, Psb30/Ycf12, peripheral proteins PsbO, CyanoQ (PsbQ), PsbU, PsbV and a large number of cofactors. It forms dimeric complexes. Heme b is required as a cofactor.

It is found in the cellular thylakoid membrane. In terms of biological role, this b-type cytochrome is tightly associated with the reaction center of photosystem II (PSII). PSII is a light-driven water:plastoquinone oxidoreductase that uses light energy to abstract electrons from H(2)O, generating O(2) and a proton gradient subsequently used for ATP formation. It consists of a core antenna complex that captures photons, and an electron transfer chain that converts photonic excitation into a charge separation. The chain is Cytochrome b559 subunit beta from Prochlorococcus marinus (strain MIT 9301).